A 31-amino-acid polypeptide reads, in one-letter code: Photosystem II reaction center protein T (31 aa).

A helical membrane pass occupies residues 3–23; that stretch reads ALVYVFLLTGTLMVIFFAIFF.

This sequence belongs to the PsbT family. As to quaternary structure, PSII is composed of 1 copy each of membrane proteins PsbA, PsbB, PsbC, PsbD, PsbE, PsbF, PsbH, PsbI, PsbJ, PsbK, PsbL, PsbM, PsbT, PsbX, PsbY, PsbZ, Psb30/Ycf12, at least 3 peripheral proteins of the oxygen-evolving complex and a large number of cofactors. It forms dimeric complexes.

It localises to the plastid. The protein localises to the chloroplast thylakoid membrane. In terms of biological role, found at the monomer-monomer interface of the photosystem II (PS II) dimer, plays a role in assembly and dimerization of PSII. PSII is a light-driven water plastoquinone oxidoreductase, using light energy to abstract electrons from H(2)O, generating a proton gradient subsequently used for ATP formation. This is Photosystem II reaction center protein T from Pyropia yezoensis (Susabi-nori).